Consider the following 1060-residue polypeptide: Probable serine/threonine-protein kinase MARK-A (1060 aa).

Basic and acidic residues-rich tracts occupy residues 1–11 (METLKEEEQFR) and 23–37 (HLKE…EREQ). 2 disordered regions span residues 1–52 (METL…LQLQ) and 67–88 (NKIP…SISV). Low complexity-rich tracts occupy residues 38–52 (QQQQ…LQLQ) and 68–88 (KIPS…SISV). In terms of domain architecture, Protein kinase spans 109–361 (YLVIKTIGRG…MEEIINHPWL (253 aa)). ATP is bound by residues 115 to 123 (IGRGQFGKV) and K139. The active-site Proton acceptor is the D232. The segment covering 409–475 (INNINNTMAT…TTTTNATTTT (67 aa)) has biased composition (low complexity). Disordered stretches follow at residues 409–488 (INNI…NNEE), 560–701 (GENS…SPLC), 714–886 (LREK…PVHS), and 899–966 (DDKS…QEPR). The 41-residue stretch at 488-528 (ELDQEIIEELVGLGFEREELCNSIRQNKYNDAASTYFLLQG) folds into the UBA domain. Residues 577–594 (TVDSPKSTNTPQYRSSNT) are compositionally biased toward polar residues. Composition is skewed to low complexity over residues 603 to 613 (QQQQQQQQQQQ), 620 to 637 (QQQN…NNHN), 650 to 699 (STTV…NPSP), and 720 to 760 (TTTN…TSPN). Polar residues predominate over residues 761 to 770 (LQPFSLASTA). Low complexity-rich tracts occupy residues 771–799 (NNNN…SLNS) and 811–831 (QQQQ…NSSS). A compositionally biased stretch (basic and acidic residues) spans 837-846 (QRQESRKLED). 2 stretches are compositionally biased toward low complexity: residues 904 to 926 (NSSS…TNNT) and 935 to 965 (QNSN…QQEP). The KA1 domain maps to 1008–1057 (IECETEGVRFSIEICRLPRLSVNGLKFKRIGGSSWRYKSICKDLLSQMKL).

It belongs to the protein kinase superfamily. CAMK Ser/Thr protein kinase family. SNF1 subfamily.

It carries out the reaction L-seryl-[protein] + ATP = O-phospho-L-seryl-[protein] + ADP + H(+). The enzyme catalyses L-threonyl-[protein] + ATP = O-phospho-L-threonyl-[protein] + ADP + H(+). This is Probable serine/threonine-protein kinase MARK-A (mrkA) from Dictyostelium discoideum (Social amoeba).